The chain runs to 248 residues: Small ribosomal subunit protein uS2 (248 aa).

Belongs to the universal ribosomal protein uS2 family.

The protein is Small ribosomal subunit protein uS2 of Cupriavidus necator (strain ATCC 17699 / DSM 428 / KCTC 22496 / NCIMB 10442 / H16 / Stanier 337) (Ralstonia eutropha).